Consider the following 426-residue polypeptide: MAIEHEDDLKDEKNPRPLDEDDIALLKTYGLGPYSASIKKVEKEIKDMSKKVNDLIGIKESDTGLAAPSQWDLVSDKQMMQEEQPLQVARCTKIINPNTEDAKYVINVKQIAKFVVGLGDKVSPTDIEEGMRVGVDRNKYQIQIPLPPKIDPSVTMMTVEEKPDVTYNDVGGCKEQIEKMREVVELPMLHPEKFVKLGIDPPKGVLCYGPPGTGKTLLARAVANRTDACFIRVIGSELVQKYVGEGARMVRELFQMARSKKACIVFFDEVDAIGGARFDDGVGGDNEVQRTMLEIVNQLDGFDARGNIKVLMATNRPDTLDPALLRPGRLDRKVEFGLPDLEGRTQIFKIHTRTMNCERDIRFELLARLCPNSTGADIRSVCTEAGMYAIRARRKTVTEKDFLDAVNKVIKGYQKFSATPKYMVYN.

209–216 is an ATP binding site; it reads GPPGTGKT.

This sequence belongs to the AAA ATPase family.

The protein localises to the cytoplasm. The protein resides in the nucleus. The 26S proteasome is involved in the ATP-dependent degradation of ubiquitinated proteins. The regulatory (or ATPase) complex confers ATP dependency and substrate specificity to the 26S complex. This Spinacia oleracea (Spinach) protein is 26S proteasome regulatory subunit 7 (RPT1).